We begin with the raw amino-acid sequence, 503 residues long: Cobyric acid synthase (503 aa).

Positions 245-447 constitute a GATase cobBQ-type domain; sequence DISIAIIRLP…LHGIFDEISL (203 aa). C326 (nucleophile) is an active-site residue. H439 is a catalytic residue.

It belongs to the CobB/CobQ family. CobQ subfamily.

It functions in the pathway cofactor biosynthesis; adenosylcobalamin biosynthesis. Its function is as follows. Catalyzes amidations at positions B, D, E, and G on adenosylcobyrinic A,C-diamide. NH(2) groups are provided by glutamine, and one molecule of ATP is hydrogenolyzed for each amidation. The chain is Cobyric acid synthase from Alkaliphilus metalliredigens (strain QYMF).